A 362-amino-acid polypeptide reads, in one-letter code: MDPATNSPIMPIDLPIMHDSDRYDFVKDIGSGNFGVARLMTDRVTKELVAVKYIERGEKIDENVQREIINHRSLRHPNIVRFKEVILTPSHLAIVMEYAAGGELYERICNAGRFSEDEARFFFQQLISGVSYCHAMQICHRDLKLENTLLDGSPAPRLKICDFGYSKSSVLHSQPKSTVGTPAYIAPEILLRQEYDGKLADVWSCGVTLYVMLVGAYPFEDPQEPRDYRKTIQRILSVTYSIPEDLHLSPECRHLISRIFVADPATRITIPEITSDKWFLKNLPGDLMDENRMGSQFQEPEQPMQSLDTIMQIISEATIPTVRNRCLDDFMADNLDLDDDMDDFDSESEIDVDSSGEIVYAL.

Positions 23–279 (YDFVKDIGSG…IPEITSDKWF (257 aa)) constitute a Protein kinase domain. Residues 29 to 37 (IGSGNFGVA) and Lys52 each bind ATP. The active-site Proton acceptor is Asp142.

This sequence belongs to the protein kinase superfamily. Ser/Thr protein kinase family. Interacts with ABI1. Interacts with I-2, TOPP1 and TOPP2. Interacts with FREE1 (via C-terminus). In terms of tissue distribution, expressed in seeds, seedlings, roots (especially in tips), stems, leaves, shoots, flowers and siliques.

It catalyses the reaction L-seryl-[protein] + ATP = O-phospho-L-seryl-[protein] + ADP + H(+). The enzyme catalyses L-threonyl-[protein] + ATP = O-phospho-L-threonyl-[protein] + ADP + H(+). Functionally, together with SRK2I, key component and activator of the abscisic acid (ABA) signaling pathway that regulates numerous ABA responses, such as seed germination, Pro accumulation, root growth inhibition, dormancy and seedling growth, and, to a lesser extent, stomatal closure. In response to ABA, phosphorylates the ESCRT-I complex component FREE1, which is required for ABA-induced FREE1 nuclear import. This chain is Serine/threonine-protein kinase SRK2D (SRK2D), found in Arabidopsis thaliana (Mouse-ear cress).